We begin with the raw amino-acid sequence, 232 residues long: Octanoyltransferase (232 aa).

A BPL/LPL catalytic domain is found at 44-219; the sequence is EHTGDELWVV…QLARQFGLVL (176 aa). Substrate contacts are provided by residues 83–90, 150–152, and 163–165; these read RGGQVTYH, ALG, and GLS. C181 functions as the Acyl-thioester intermediate in the catalytic mechanism.

The protein belongs to the LipB family.

The protein resides in the cytoplasm. The enzyme catalyses octanoyl-[ACP] + L-lysyl-[protein] = N(6)-octanoyl-L-lysyl-[protein] + holo-[ACP] + H(+). Its pathway is protein modification; protein lipoylation via endogenous pathway; protein N(6)-(lipoyl)lysine from octanoyl-[acyl-carrier-protein]: step 1/2. Catalyzes the transfer of endogenously produced octanoic acid from octanoyl-acyl-carrier-protein onto the lipoyl domains of lipoate-dependent enzymes. Lipoyl-ACP can also act as a substrate although octanoyl-ACP is likely to be the physiological substrate. This chain is Octanoyltransferase, found in Xanthomonas campestris pv. campestris (strain 8004).